The following is a 162-amino-acid chain: Putative ureidoglycolate lyase (162 aa).

Belongs to the ureidoglycolate lyase family. As to quaternary structure, homodimer. Ni(2+) serves as cofactor.

The catalysed reaction is (S)-ureidoglycolate = urea + glyoxylate. The protein operates within nitrogen metabolism; (S)-allantoin degradation. In terms of biological role, catalyzes the catabolism of the allantoin degradation intermediate (S)-ureidoglycolate, generating urea and glyoxylate. Involved in the utilization of allantoin as nitrogen source. This Agrobacterium fabrum (strain C58 / ATCC 33970) (Agrobacterium tumefaciens (strain C58)) protein is Putative ureidoglycolate lyase.